A 378-amino-acid polypeptide reads, in one-letter code: Metalloendoproteinase 2-MMP (378 aa).

A signal peptide spans 1–20; it reads MRFCVFGFLSLFLIVSPASA. Residues 21-154 constitute a propeptide, activation peptide; sequence WFFPNSTAVP…SRTHLHAVKR (134 aa). N-linked (GlcNAc...) asparagine glycosylation is found at Asn-25, Asn-35, Asn-46, Asn-79, and Asn-102. The Cysteine switch signature appears at 118 to 125; that stretch reads PRCGNPDV. Residue Cys-120 coordinates Zn(2+). N-linked (GlcNAc...) asparagine glycosylation is found at Asn-127, Asn-143, and Asn-203. His-280 contributes to the Zn(2+) binding site. The active site involves Glu-281. Zn(2+) is bound by residues His-284 and His-290. Asn-330 carries an N-linked (GlcNAc...) asparagine glycan. A lipid anchor (GPI-anchor amidated serine) is attached at Ser-349. Residues 350–378 constitute a propeptide, removed in mature form; the sequence is AAWRIDGSSRSTIVSLLLSTVGLVLWFLP.

Belongs to the peptidase M10A family. Matrix metalloproteinases (MMPs) subfamily. Zn(2+) is required as a cofactor. Mostly expressed in roots, and, to a lower extent, in flowers, leaves and stems.

Its subcellular location is the cell membrane. Repressed by acetohydroxamic acid (AHA). Its function is as follows. Matrix metalloproteinases (MMPs) or matrixins may play a role in the degradation and remodeling of the extracellular matrix (ECM) during development or in response to stresses. Required for plant growth, morphogenesis, and development with particular relevance for flowering and senescence. Active on McaPLGLDpaAR-NH(2) (QF24) and myelin basic protein (MBP) and, to some extent, on beta-casein. This is Metalloendoproteinase 2-MMP from Arabidopsis thaliana (Mouse-ear cress).